A 370-amino-acid chain; its full sequence is sn-glycerol-3-phosphate import ATP-binding protein UgpC (370 aa).

One can recognise an ABC transporter domain in the interval 4–236; the sequence is LSLKNIAKRY…PATAFVAAFM (233 aa). 38–45 provides a ligand contact to ATP; the sequence is GPSGCGKS.

It belongs to the ABC transporter superfamily. sn-glycerol-3-phosphate importer (TC 3.A.1.1.3) family. The complex is composed of two ATP-binding proteins (UgpC), two transmembrane proteins (UgpA and UgpE) and a solute-binding protein (UgpB).

The protein resides in the cell inner membrane. It carries out the reaction sn-glycerol 3-phosphate(out) + ATP + H2O = sn-glycerol 3-phosphate(in) + ADP + phosphate + H(+). Functionally, part of the ABC transporter complex UgpBAEC involved in sn-glycerol-3-phosphate (G3P) import. Responsible for energy coupling to the transport system. The sequence is that of sn-glycerol-3-phosphate import ATP-binding protein UgpC from Chromobacterium violaceum (strain ATCC 12472 / DSM 30191 / JCM 1249 / CCUG 213 / NBRC 12614 / NCIMB 9131 / NCTC 9757 / MK).